We begin with the raw amino-acid sequence, 489 residues long: Probable apyrase 1 (489 aa).

The Cytoplasmic portion of the chain corresponds to 1–28 (MRRFSAAAGARQQQQQGEAVSDRVLRFR). The chain crosses the membrane as a helical; Signal-anchor for type II membrane protein span at residues 29 to 49 (GVLVVVLAPVLLISLVLLLMP). Topologically, residues 50–489 (RAPASATVEG…GSAIEVASSS (440 aa)) are extracellular. Residue 89–99 (VIFDAGSSGSR) participates in ATP binding. The active-site Proton acceptor is Glu211. Position 235-245 (235-245 (GVVDLGGGSVQ)) interacts with ATP.

This sequence belongs to the GDA1/CD39 NTPase family. The cofactor is Ca(2+).

The protein localises to the membrane. It catalyses the reaction a ribonucleoside 5'-triphosphate + 2 H2O = a ribonucleoside 5'-phosphate + 2 phosphate + 2 H(+). Its function is as follows. Catalyzes the hydrolysis of phosphoanhydride bonds of nucleoside tri- and di-phosphates. The polypeptide is Probable apyrase 1 (APY1) (Oryza sativa subsp. japonica (Rice)).